A 31-amino-acid polypeptide reads, in one-letter code: YSPSLTDLQSYNAMNGPALKAGDILAVPLPA.

Residues 1-28 (YSPSLTDLQSYNAMNGPALKAGDILAVP) form a LysM 1 repeat.

In Jatropha curcas (Barbados nut), this protein is LysM-domain containing protein.